The sequence spans 173 residues: Putative C-type lectin protein FPV198 (173 aa).

In terms of domain architecture, C-type lectin spans 50–169 (GMSGWVQINN…CNKKHTGICF (120 aa)).

The sequence is that of Putative C-type lectin protein FPV198 from Vertebrata (FPV).